The sequence spans 215 residues: Redox-sensing transcriptional repressor Rex 2 (215 aa).

The H-T-H motif DNA-binding region spans 15 to 54 (VYLRYLKMLGDSGVKRIKSREFSEMIQIPSATIRRDFSHV). Residue 89-94 (GCGNLG) participates in NAD(+) binding.

Belongs to the transcriptional regulatory Rex family. In terms of assembly, homodimer.

The protein resides in the cytoplasm. Its function is as follows. Modulates transcription in response to changes in cellular NADH/NAD(+) redox state. This Enterococcus faecalis (strain ATCC 700802 / V583) protein is Redox-sensing transcriptional repressor Rex 2.